We begin with the raw amino-acid sequence, 165 residues long: Large ribosomal subunit protein uL10 (165 aa).

Belongs to the universal ribosomal protein uL10 family. As to quaternary structure, part of the ribosomal stalk of the 50S ribosomal subunit. The N-terminus interacts with L11 and the large rRNA to form the base of the stalk. The C-terminus forms an elongated spine to which L12 dimers bind in a sequential fashion forming a multimeric L10(L12)X complex.

Its function is as follows. Forms part of the ribosomal stalk, playing a central role in the interaction of the ribosome with GTP-bound translation factors. In Hamiltonella defensa subsp. Acyrthosiphon pisum (strain 5AT), this protein is Large ribosomal subunit protein uL10.